A 190-amino-acid chain; its full sequence is MLTRFTRLRPILQLRYLAQNSHIEEEYFEELEPTGIISSHETSQEPPKRTGFRSQNLSEDADFVENVVGALTDQRAKDVFVVKSEETEMTPYTHKIICSAFNSRQASAISENLRSLLKIDGVSNGSMSHARRSTKRSNGWYVSEVERVQVHVMSEECREKYDLEAIWAGDDRILDEIDEEKQKILLPPRR.

The protein belongs to the Iojap/RsfS family.

This is an uncharacterized protein from Caenorhabditis elegans.